The primary structure comprises 291 residues: Insulin-like growth factor-binding protein 3 (291 aa).

Positions 1–27 (MQRARPTLWAAALTLLVLLRGPPVARA) are cleaved as a signal peptide. The tract at residues 28–134 (GASSAGLGPV…AYLLPAPPAP (107 aa)) is IGF-binding. The region spanning 36–117 (PVVRCEPCDA…LDGRGLCVNA (82 aa)) is the IGFBP N-terminal domain. 6 disulfide bridges follow: Cys-40-Cys-67, Cys-43-Cys-69, Cys-51-Cys-70, Cys-58-Cys-73, Cys-81-Cys-94, and Cys-88-Cys-114. Residues Asn-116 and Asn-136 are each glycosylated (N-linked (GlcNAc...) (complex) asparagine). Disordered regions lie at residues 130–162 (APPA…RVSD) and 189–211 (DYES…TEYG). Residues 146-156 (AGSVESPSVSS) are compositionally biased toward low complexity. The residue at position 148 (Ser-148) is a Phosphoserine; by FAM20C. A compositionally biased stretch (polar residues) spans 191–202 (ESQSTDTQNFSS). Ser-194 carries the post-translational modification Phosphoserine; by CK2. Residue Asn-199 is glycosylated (N-linked (GlcNAc...) (complex) asparagine). Ser-201 carries the post-translational modification Phosphoserine; by FAM20C. A Phosphoserine; by CK2 modification is found at Ser-202. The Thyroglobulin type-1 domain occupies 210–285 (YGPCRREMED…TTKGKEDVHC (76 aa)). 3 cysteine pairs are disulfide-bonded: Cys-213-Cys-240, Cys-251-Cys-262, and Cys-264-Cys-285.

In terms of assembly, interacts with XLKD1. Binds IGF2 more than IGF1. Forms a ternary complex of about 140 to 150 kDa with IGF1 or IGF2 and a 85 kDa glycoprotein (ALS). Interacts with humanin; humanin competes with importin KPNB1 for binding to IGFBP3, blocking IGFBP3 nuclear import and IGFBP3-mediated apoptosis. Interacts with TMEM219. Interacts with RXRA; this interaction modulates the transcriptional activity of RXRA. Interacts with LRP1; this interaction mediates cell growth inhibition independent of IGF1. Phosphorylated by FAM20C in the extracellular medium. Phosphorylated by CK2; resulting in decreased nuclear localization. As to expression, expressed by most tissues. Present in plasma.

The protein localises to the secreted. Its subcellular location is the nucleus. Multifunctional protein that plays a critical role in regulating the availability of IGFs such as IGF1 and IGF2 to their receptors and thereby regulates IGF-mediated cellular processes including proliferation, differentiation, and apoptosis in a cell-type specific manner. Also exhibits IGF-independent antiproliferative and apoptotic effects mediated by its receptor TMEM219/IGFBP-3R. Inhibits the positive effect of humanin on insulin sensitivity. Promotes testicular germ cell apoptosis. Acts via LRP-1/alpha2M receptor, also known as TGF-beta type V receptor, to mediate cell growth inhibition independent of IGF1. Mechanistically, induces serine-specific dephosphorylation of IRS1 or IRS2 upon ligation to its receptor, leading to the inhibitory cascade. In the nucleus, interacts with transcription factors such as retinoid X receptor-alpha/RXRA to regulate transcriptional signaling and apoptosis. The chain is Insulin-like growth factor-binding protein 3 (IGFBP3) from Homo sapiens (Human).